The primary structure comprises 763 residues: Cadherin-like protein 26 (763 aa).

An N-terminal signal peptide occupies residues 1-20; that stretch reads MDTRGCAWLLLLLSLPQGQS. 4 Cadherin domains span residues 21–140, 141–250, 251–371, and 370–478; these read HQPL…APQF, PEKE…MPTF, MEDR…PPAF, and AFHP…APTL. Residues 21-590 are Extracellular-facing; that stretch reads HQPLHRSKRR…SECEEPSDTW (570 aa). Residues Asn56, Asn60, and Asn146 are each glycosylated (N-linked (GlcNAc...) asparagine). Residues Asn394 and Asn440 are each glycosylated (N-linked (GlcNAc...) asparagine). Residues 591–611 traverse the membrane as a helical segment; the sequence is LLWWALSPVGAALMVLSAALL. Residues 612-763 are Cytoplasmic-facing; sequence CLLRCSCTFG…AMCFTSRVPS (152 aa).

In terms of assembly, homodimer. Component of a cadherin:catenin adhesion complex composed of at least of CDH26, beta-catenin/CTNNB1, alpha-catenin/CTNNA1 and p120 catenin/CTNND1. N-glycosylated.

It is found in the cell membrane. Its function is as follows. Cadherins are calcium-dependent cell adhesion proteins. They preferentially interact with themselves in a homophilic manner in connecting cells; cadherins may thus contribute to the sorting of heterogeneous cell types. Ligand for integrins alpha-E/beta-7, ITGAE:ITGAB7, alpha-4/beta-7, ITGA4:ITGAB7 and alpha-4/beta-1, ITGA4:ITGAB1 through which modulates CD4(+) T cells activation. The chain is Cadherin-like protein 26 (Cdh26) from Mus musculus (Mouse).